A 349-amino-acid polypeptide reads, in one-letter code: CCN family member 2 (349 aa).

Positions 1–26 (MSATGLSPVRCAFVLLLALCSRPASG) are cleaved as a signal peptide. One can recognise an IGFBP N-terminal domain in the interval 27-98 (QDCSGQCQCA…NRKIGVCTAK (72 aa)). Cystine bridges form between Cys-29–Cys-54, Cys-33–Cys-56, Cys-35–Cys-57, Cys-43–Cys-60, Cys-68–Cys-82, and Cys-74–Cys-95. Residues 101 to 167 (APCVFGGTVY…GKCCEEWVCD (67 aa)) form the VWFC domain. Residues 198–243 (NCLVQTTEWSACSKTCGMGISTRVTNDNAFCRLEKQSRLCMVRPCE) form the TSP type-1 domain. The heparin-binding stretch occupies residues 247–349 (EENIKKGKKC…YYRKMYGDMA (103 aa)). Disulfide bonds link Cys-256-Cys-293, Cys-273-Cys-307, Cys-284-Cys-323, Cys-287-Cys-325, and Cys-292-Cys-329. The region spanning 256–330 (CIRTPKISKP…KTCACHYNCP (75 aa)) is the CTCK domain.

The protein belongs to the CCN family. In terms of assembly, monomer. Interacts with TSKU.

The protein resides in the secreted. The protein localises to the extracellular space. Its subcellular location is the extracellular matrix. Its function is as follows. Major connective tissue mitoattractant secreted by vascular endothelial cells. Promotes proliferation and differentiation of chondrocytes. Is involved in the stimulation of osteoblast differentiation and has a critical role in osteogenesis. Mediates heparin- and divalent cation-dependent cell adhesion in many cell types including fibroblasts, myofibroblasts, endothelial and epithelial cells. Enhances fibroblast growth factor-induced DNA synthesis. The chain is CCN family member 2 (CCN2) from Sus scrofa (Pig).